The primary structure comprises 413 residues: CCA-adding enzyme (413 aa).

ATP is bound by residues Ser-42 and Lys-45. CTP contacts are provided by Ser-42 and Lys-45. Residues Asp-54, Asp-56, and Asp-107 each contribute to the Mg(2+) site. Positions 130, 150, and 159 each coordinate ATP. The CTP site is built by His-130, Lys-150, and Tyr-159.

It belongs to the tRNA nucleotidyltransferase/poly(A) polymerase family. Archaeal CCA-adding enzyme subfamily. As to quaternary structure, homodimer. Requires Mg(2+) as cofactor.

It carries out the reaction a tRNA precursor + 2 CTP + ATP = a tRNA with a 3' CCA end + 3 diphosphate. The enzyme catalyses a tRNA with a 3' CCA end + 2 CTP + ATP = a tRNA with a 3' CCACCA end + 3 diphosphate. Functionally, catalyzes the addition and repair of the essential 3'-terminal CCA sequence in tRNAs without using a nucleic acid template. Adds these three nucleotides in the order of C, C, and A to the tRNA nucleotide-73, using CTP and ATP as substrates and producing inorganic pyrophosphate. tRNA 3'-terminal CCA addition is required both for tRNA processing and repair. Also involved in tRNA surveillance by mediating tandem CCA addition to generate a CCACCA at the 3' terminus of unstable tRNAs. While stable tRNAs receive only 3'-terminal CCA, unstable tRNAs are marked with CCACCA and rapidly degraded. The chain is CCA-adding enzyme from Sulfurisphaera tokodaii (strain DSM 16993 / JCM 10545 / NBRC 100140 / 7) (Sulfolobus tokodaii).